The sequence spans 336 residues: Probable deoxyhypusine synthase (336 aa).

Lysine 308 serves as the catalytic Nucleophile.

This sequence belongs to the deoxyhypusine synthase family. NAD(+) is required as a cofactor.

It catalyses the reaction [eIF5A protein]-L-lysine + spermidine = [eIF5A protein]-deoxyhypusine + propane-1,3-diamine. The protein operates within protein modification; eIF5A hypusination. Functionally, catalyzes the NAD-dependent oxidative cleavage of spermidine and the subsequent transfer of the butylamine moiety of spermidine to the epsilon-amino group of a specific lysine residue of the eIF-5A precursor protein to form the intermediate deoxyhypusine residue. This Thermococcus gammatolerans (strain DSM 15229 / JCM 11827 / EJ3) protein is Probable deoxyhypusine synthase.